The sequence spans 269 residues: Glutamate 5-kinase 2 (269 aa).

K16 is an ATP binding site. Residues S57, D144, and N156 each coordinate substrate. ATP is bound at residue 218-224; sequence SGGMISK.

It belongs to the glutamate 5-kinase family.

It localises to the cytoplasm. The catalysed reaction is L-glutamate + ATP = L-glutamyl 5-phosphate + ADP. The protein operates within amino-acid biosynthesis; L-proline biosynthesis; L-glutamate 5-semialdehyde from L-glutamate: step 1/2. In terms of biological role, catalyzes the transfer of a phosphate group to glutamate to form L-glutamate 5-phosphate. This chain is Glutamate 5-kinase 2, found in Rhizobium meliloti (strain 1021) (Ensifer meliloti).